A 268-amino-acid polypeptide reads, in one-letter code: Putative sgc region protein SgcQ (268 aa).

It belongs to the BtpA family.

The protein is Putative sgc region protein SgcQ (sgcQ) of Escherichia coli (strain K12).